Reading from the N-terminus, the 152-residue chain is Ribosome maturation factor RimP (152 aa).

The protein belongs to the RimP family.

Its subcellular location is the cytoplasm. Required for maturation of 30S ribosomal subunits. This Sodalis glossinidius (strain morsitans) protein is Ribosome maturation factor RimP.